The primary structure comprises 490 residues: MQFSTFQKNLDDWQGSSLIFGVLEEEIASQLENIKFVIDPKLLLKKVTQKKFKGEKGEILSFEFLDQNLETLFIVGLGKLKDLNKSDIENSIGNLVRKTVDKNEKMSILLPWEFINSQLEINQLAESVRLSAYKDNRFNKKKDEKKVLKEIEFLNLKKFENISFEETAQICEGVELARRLVAAPPNSLTPQEMSIQASQIAKDHGLGVKILEAKDCEDLGMGAYLAVAKGSDLDPKFIHLTLKSEGPIKEKIALVGKGLTFDSGGYNLKVGASQIEMMKYDMGGSAAVLGAAKALGAIKPKGLEIHFIVASCENMINGSAVHPGDVVKASNGKTIEINNTDAEGRLTLADALTYASNLKPDSIIDLATLTGAIVVALGNDVAGFWSNNDNLANDLKAASAQSGEELWQMPLQKSYKEGLKSHIADMKNTGPRAGGSITAALFLEEFFDKEIKWAHIDIAGTCWTDKNKGINPSGATGFGVKTLVQWIKNK.

Residues lysine 257 and aspartate 262 each contribute to the Mn(2+) site. Lysine 269 is a catalytic residue. 3 residues coordinate Mn(2+): aspartate 281, aspartate 341, and glutamate 343. The active site involves arginine 345.

The protein belongs to the peptidase M17 family. Mn(2+) is required as a cofactor.

Its subcellular location is the cytoplasm. The enzyme catalyses Release of an N-terminal amino acid, Xaa-|-Yaa-, in which Xaa is preferably Leu, but may be other amino acids including Pro although not Arg or Lys, and Yaa may be Pro. Amino acid amides and methyl esters are also readily hydrolyzed, but rates on arylamides are exceedingly low.. It catalyses the reaction Release of an N-terminal amino acid, preferentially leucine, but not glutamic or aspartic acids.. In terms of biological role, presumably involved in the processing and regular turnover of intracellular proteins. Catalyzes the removal of unsubstituted N-terminal amino acids from various peptides. The chain is Probable cytosol aminopeptidase from Prochlorococcus marinus (strain MIT 9215).